The primary structure comprises 1031 residues: Formin-binding protein 4 (1031 aa).

Disordered regions lie at residues 1–102, 116–143, and 166–205; these read MMGK…TTRP, AYAD…NQAT, and APVV…QTPG. A Phosphoserine modification is found at Ser19. 2 stretches are compositionally biased toward low complexity: residues 41–73 and 83–92; these read DSTA…APED and VVEVPNVVQN. Phosphoserine is present on residues Ser120, Ser125, and Ser128. Positions 134–143 are enriched in polar residues; it reads SKEANGNQAT. Position 176 is a phosphothreonine (Thr176). Polar residues predominate over residues 190-203; it reads LSPTASNGSDTAQT. In terms of domain architecture, WW 1 spans 218–252; that stretch reads EIEMGDWQEVWDENTGCYYYWNTQTNEVTWELPQY. An N6-acetyllysine modification is found at Lys294. A Glycyl lysine isopeptide (Lys-Gly) (interchain with G-Cter in SUMO1) cross-link involves residue Lys305. Residue Lys339 forms a Glycyl lysine isopeptide (Lys-Gly) (interchain with G-Cter in SUMO2) linkage. Lys352 participates in a covalent cross-link: Glycyl lysine isopeptide (Lys-Gly) (interchain with G-Cter in SUMO1); alternate. A Glycyl lysine isopeptide (Lys-Gly) (interchain with G-Cter in SUMO2); alternate cross-link involves residue Lys352. Positions 355–518 are disordered; it reads DPVSETKETS…KETEVEESSE (164 aa). Residues 400–414 are compositionally biased toward acidic residues; it reads ESEEEEEEEEQDTLE. A compositionally biased stretch (basic and acidic residues) spans 418 to 430; sequence ALERKKAELRALE. A phosphoserine mark is found at Ser435, Ser440, Ser443, Ser446, and Ser450. Positions 436-450 are enriched in polar residues; it reads VSGSSPRSDISQPAS. Residues 457 to 466 show a composition bias toward basic residues; sequence IMSKRGKWKM. Low complexity predominate over residues 469-482; it reads RATSPESTSRSSSK. Residues Ser472, Ser507, and Ser516 each carry the phosphoserine modification. Residues 499 to 518 are compositionally biased toward basic and acidic residues; it reads DSEKIDEISDKETEVEESSE. Residue Lys527 forms a Glycyl lysine isopeptide (Lys-Gly) (interchain with G-Cter in SUMO1); alternate linkage. A Glycyl lysine isopeptide (Lys-Gly) (interchain with G-Cter in SUMO2); alternate cross-link involves residue Lys527. In terms of domain architecture, WW 2 spans 603–637; that stretch reads NATPKGWSCHWDRDHRRYFYVNEQSGESQWEFPDG. Disordered stretches follow at residues 629–681, 712–813, and 900–994; these read ESQW…SLCK, PLPL…VQRS, and PAQA…RIEE. Over residues 643–663 the composition is skewed to basic and acidic residues; the sequence is SQTKEVRDESLPKLTVKDKTC. Residues 664–677 show a composition bias toward polar residues; sequence TDPNSTESSENPTG. Residues 712–741 are compositionally biased toward pro residues; sequence PLPLEMPPPPPPPPESPPPPPPPPPPPPPL. Residues 742-757 are compositionally biased toward acidic residues; sequence EDGEIQEVEMEDEGSE. Residues 771–794 are compositionally biased toward polar residues; sequence KPSTQTTAVTSQSLVDSTASSPPS. The segment covering 913–939 has biased composition (pro residues); the sequence is VEPPPPPPPPPTPTPPPPPPAPKVPPP. The span at 943-955 shows a compositional bias: basic residues; it reads RKGKKDKAKKSKT. Residues 971 to 984 show a composition bias toward acidic residues; sequence LDEEDNSSSSEEDR. 3 positions are modified to phosphoserine: Ser977, Ser978, and Ser979. Positions 985–994 are enriched in basic and acidic residues; the sequence is ESTAQKRIEE.

Binds FMN1. Interacts with the Arg/Gly-rich-flanked Pro-rich regions of KHDRBS1/SAM68. Arginine methylation in these regions has no effect on this binding. Ubiquitous. Highest levels in spleen and thymus.

The chain is Formin-binding protein 4 (Fnbp4) from Mus musculus (Mouse).